The primary structure comprises 262 residues: PsbP domain-containing protein 6, chloroplastic (262 aa).

Cys128 and Cys132 are disulfide-bonded.

Belongs to the PsbP family.

Its subcellular location is the plastid. The protein localises to the chloroplast thylakoid lumen. In terms of biological role, may be involved in the redox regulation of photosystem II. This is PsbP domain-containing protein 6, chloroplastic (PPD6) from Arabidopsis thaliana (Mouse-ear cress).